A 164-amino-acid polypeptide reads, in one-letter code: Putative ankyrin repeat protein RBE_0585 (164 aa).

ANK repeat units lie at residues 42–107 (NQDT…VAIL) and 126–149 (DKDTPLIEAARAALPQSISFMLDY).

The sequence is that of Putative ankyrin repeat protein RBE_0585 from Rickettsia bellii (strain RML369-C).